The chain runs to 213 residues: Large ribosomal subunit protein uL3 (213 aa).

This sequence belongs to the universal ribosomal protein uL3 family. As to quaternary structure, part of the 50S ribosomal subunit. Forms a cluster with proteins L14 and L19.

One of the primary rRNA binding proteins, it binds directly near the 3'-end of the 23S rRNA, where it nucleates assembly of the 50S subunit. In Desulforudis audaxviator (strain MP104C), this protein is Large ribosomal subunit protein uL3.